A 417-amino-acid polypeptide reads, in one-letter code: Phosphoglycerate kinase, cytosolic (417 aa).

(2R)-3-phosphoglycerate-binding residues include Val-23, Asp-24, Phe-25, Asn-26, Arg-39, Ser-61, His-62, Gly-64, Arg-65, Arg-132, His-168, and Arg-169. ADP-binding residues include Gly-214 and Ala-215. Gly-214 is a CDP binding site. Residues Ala-215 and Lys-216 each coordinate AMP. Ala-215 lines the ATP pocket. Ala-215 contacts Mg(2+). Lys-216 is a binding site for (2R)-3-phosphoglycerate. Asp-219 is a CDP binding site. Residue Asp-219 participates in Mg(2+) binding. Residues Lys-220 and Gly-238 each coordinate ADP. Lys-220 serves as a coordination point for AMP. Lys-220 contributes to the ATP binding site. A CDP-binding site is contributed by Gly-238. AMP contacts are provided by Ala-239 and Ala-311. Residues Ala-239 and Ala-311 each coordinate ATP. ADP-binding residues include Ala-311 and Asn-335. Gly-336 and Phe-341 together coordinate CDP. ADP is bound by residues Phe-341, Glu-342, Asp-374, and Thr-375. Glu-342 lines the AMP pocket. The ATP site is built by Glu-342, Asp-374, and Thr-375. Asp-374 contributes to the Mg(2+) binding site.

Belongs to the phosphoglycerate kinase family. Monomer. Requires Mg(2+) as cofactor.

It localises to the cytoplasm. It catalyses the reaction (2R)-3-phosphoglycerate + ATP = (2R)-3-phospho-glyceroyl phosphate + ADP. It functions in the pathway carbohydrate degradation; glycolysis; pyruvate from D-glyceraldehyde 3-phosphate: step 2/5. This chain is Phosphoglycerate kinase, cytosolic (PGKB), found in Leishmania mexicana.